The following is a 244-amino-acid chain: Type I iodothyronine deiodinase (244 aa).

Residues 1–12 (MGLSQLGLWLRR) are Extracellular-facing. Residues 13 to 33 (LWVLFQVALQVAVGKVFLILF) traverse the membrane as a helical; Signal-anchor for type III membrane protein segment. Residues 34–244 (PSRVKQHIVA…VRAVLEKLHS (211 aa)) lie on the Cytoplasmic side of the membrane. The active site involves selenocysteine 121. Position 121 (selenocysteine 121) is a non-standard amino acid, selenocysteine.

Belongs to the iodothyronine deiodinase family. In terms of assembly, predominantly monomer. Can form homodimers but homodimerization is not essential for enzyme activity.

The protein localises to the cell membrane. It is found in the endoplasmic reticulum membrane. Its subcellular location is the basolateral cell membrane. It catalyses the reaction 3,3',5-triiodo-L-thyronine + iodide + A + H(+) = L-thyroxine + AH2. The enzyme catalyses 3,3',5'-triiodo-L-thyronine + iodide + A + H(+) = L-thyroxine + AH2. The catalysed reaction is 3,3'-diiodo-L-thyronine + iodide + A + H(+) = 3,3',5'-triiodo-L-thyronine + AH2. It carries out the reaction 3,3'-diiodo-L-thyronine + iodide + A + H(+) = 3,3',5-triiodo-L-thyronine + AH2. It catalyses the reaction 3'-iodo-L-thyronine + iodide + A + H(+) = 3',5'-diiodo-L-thyronine + AH2. The enzyme catalyses 3-iodo-L-thyronine + iodide + A + H(+) = 3,5-diiodo-L-thyronine + AH2. The catalysed reaction is 3-iodo-L-thyronine + iodide + A + H(+) = 3,3'-diiodo-L-thyronine + AH2. It carries out the reaction 3,3'-diiodothyronamine + iodide + A + H(+) = 3,3',5'-triiodothyronamine + AH2. It catalyses the reaction 3'-iodothyronamine + iodide + A + H(+) = 3',5'-diiodothyronamine + AH2. The enzyme catalyses 3-iodothyronamine + iodide + A + H(+) = 3,3'-diiodothyronamine + AH2. The catalysed reaction is 3,3'-diiodothyronamine + iodide + A + H(+) = 3,3',5-triiodothyronamine + AH2. It carries out the reaction 3-iodothyronamine + iodide + A + H(+) = 3,5-diiodothyronamine + AH2. It catalyses the reaction 3,3'-diiodo-L-thyronine sulfate + iodide + A + H(+) = 3,3',5'-triiodo-L-thyronine sulfate + AH2. The enzyme catalyses 3,3',5'-triiodo-L-thyronine sulfate + iodide + A + H(+) = L-thyroxine sulfate + AH2. The catalysed reaction is 3,3'-diiodo-L-thyronine sulfate + iodide + A + H(+) = 3,3',5-triiodo-L-thyronine sulfate + AH2. Plays a crucial role in the metabolism of thyroid hormones (TH) and has specific roles in TH activation and inactivation by deiodination. Catalyzes the deiodination of L-thyroxine (T4) to 3,5,3'-triiodothyronine (T3) and 3',5'-diiodothyronine (3',5'-T2) to 3'-monoiodothyronine (3'-T1) via outer-ring deiodination (ORD). Catalyzes the deiodination of T4 to 3,3',5'-triiodothyronine (rT3), T3 to 3,3'-diiodothyronine (3,3'-T2), 3,5-diiodothyronine (3,5-T2) to 3-monoiodothyronine (3-T1) and 3,3'-T2 to 3-T1 via inner-ring deiodination (IRD). Catalyzes the deiodination of rT3 to 3,3'-T2 via ORD. Catalyzes the phenolic ring deiodinations of 3,3',5'-triiodothyronamine, 3',5'-diiodothyronamine and 3,3'-diiodothyronamine as well as tyrosyl ring deiodinations of 3,5,3'-triiodothyronamine and 3,5-diiodothyronamine. Catalyzes the deiodination of L-thyroxine sulfate and 3,3',5-triiodo-L-thyronine sulfate via IRD and of 3,3',5'-triiodo-L-thyronine sulfate via ORD. The protein is Type I iodothyronine deiodinase (DIO1) of Felis catus (Cat).